Here is a 160-residue protein sequence, read N- to C-terminus: Lymphocyte antigen 96 (160 aa).

The N-terminal stretch at 1 to 16 (MLPFILFSTLLPLIFT) is a signal peptide. 3 disulfides stabilise this stretch: Cys25–Cys51, Cys37–Cys148, and Cys95–Cys105. Residues Asn26, Asn77, and Asn101 are each glycosylated (N-linked (GlcNAc...) asparagine). Positions 119–123 (FSFKG) are interaction with lipopolysaccharide. The N-linked (GlcNAc...) asparagine glycan is linked to Asn150.

As to quaternary structure, heterogeneous homomer formed from homodimers; disulfide-linked. Belongs to the lipopolysaccharide (LPS) receptor, a multi-protein complex containing at least CD14, LY96 and TLR4. Binds to the extracellular domains of TLR2 and TLR4. Ligand binding induces interaction with TLR4 and oligomerization of the complex. In terms of processing, N-glycosylated.

It localises to the secreted. It is found in the extracellular space. Its function is as follows. Binds bacterial lipopolysaccharide (LPS). Cooperates with TLR4 in the innate immune response to bacterial lipopolysaccharide (LPS), and with TLR2 in the response to cell wall components from Gram-positive and Gram-negative bacteria. Enhances TLR4-dependent activation of NF-kappa-B. Cells expressing both LY96 and TLR4, but not TLR4 alone, respond to LPS. In Cricetulus griseus (Chinese hamster), this protein is Lymphocyte antigen 96 (LY96).